A 75-amino-acid polypeptide reads, in one-letter code: Conotoxin Vt15.1 (75 aa).

The N-terminal stretch at 1-19 (MMPVILPLLLSLAIRGGDG) is a signal peptide. Positions 20–43 (QAIQGDRDLIAKLFKRYQEHGLSV) are excised as a propeptide. A Tryptophan amide modification is found at W73.

Belongs to the conotoxin V superfamily. Post-translationally, contains 4 disulfide bonds. In terms of tissue distribution, expressed by the venom duct.

The protein localises to the secreted. This Conus planorbis (Planorbis cone) protein is Conotoxin Vt15.1.